The sequence spans 224 residues: Claudin-19 (224 aa).

The Cytoplasmic portion of the chain corresponds to 1 to 7; it reads MANSGLQ. A helical membrane pass occupies residues 8-28; sequence LLGYFLALGGWVGIIASTALP. The Extracellular portion of the chain corresponds to 29–81; that stretch reads QWKQSSYAGDAIITAVGLYEGLWMSCASQSTGQVQCKLYDSLLALDGHIQSAR. Cysteines 54 and 64 form a disulfide. Residues 82–102 traverse the membrane as a helical segment; it reads ALMVVAVLLGFVAMVLSVVGM. At 103-117 the chain is on the cytoplasmic side; sequence KCTRVGDSNPTAKGR. The chain crosses the membrane as a helical span at residues 118–138; the sequence is VAISGGALFLLAGLCTLTAVS. At 139-160 the chain is on the extracellular side; it reads WYATLVTQEFFNPSTPVNARYE. The chain crosses the membrane as a helical span at residues 161–181; sequence FGPALFVGWASAGLAILGGSF. Over 182 to 224 the chain is Cytoplasmic; it reads LCCTCPEPERANSIPQPYRSGPSTAAREPVVKLSTSVKGPLGV.

The protein belongs to the claudin family. Can form homo- and heteropolymeric tight junction strands. Interacts with other claudins including CLDN3, CLDN10, CLDN16 and CLDN18 with highest affinity for CLDN16. Interacts (via PDZ-binding motif TRV) with TJP1 (via PDZ domain).

It localises to the cell junction. Its subcellular location is the tight junction. It is found in the cell membrane. It carries out the reaction Mg(2+)(in) = Mg(2+)(out). It catalyses the reaction Ca(2+)(in) = Ca(2+)(out). The catalysed reaction is Na(+)(in) = Na(+)(out). The enzyme catalyses K(+)(in) = K(+)(out). It carries out the reaction Rb(+)(in) = Rb(+)(out). It catalyses the reaction Cs(+)(in) = Cs(+)(out). The catalysed reaction is Li(+)(in) = Li(+)(out). Forms paracellular channels: coassembles with CLDN16 into tight junction strands with cation-selective channels through the strands, conveying epithelial permeability in a process known as paracellular tight junction permeability. Involved in the maintenance of ion gradients along the nephron. In the thick ascending limb (TAL) of Henle's loop, facilitates sodium paracellular permeability from the interstitial compartment to the lumen, contributing to the lumen-positive transepithelial potential that drives paracellular magnesium and calcium reabsorption. Forms paracellular barriers on its own. In the peripheral nervous system, represents a major constituent of the tight junctions in Schwann cells and contributes to electrical sealing. During retinal neurogenesis, may regulate the barrier properties of tight junctions in retinal pigment epithelium, required for proper retinal tissue differentiation and vision. The protein is Claudin-19 of Rattus norvegicus (Rat).